The primary structure comprises 367 residues: 2-oxoisovalerate dehydrogenase subunit alpha (367 aa).

Substrate contacts are provided by residues Phe-66, Tyr-95, 128 to 131, and Ser-144; that span reads MPEH. 94-96 serves as a coordination point for thiamine diphosphate; it reads YYR. Thiamine diphosphate contacts are provided by residues 144 to 146, 174 to 180, 204 to 208, and His-273; these read SPI, GDGATSE, and NFYAI. Mg(2+) is bound by residues Asp-175, Asn-204, and Tyr-206.

This sequence belongs to the BCKDHA family. Heterotetramer of two alpha and two beta chains. Directly associated with ODBB in the E1 complex. It depends on thiamine diphosphate as a cofactor.

It catalyses the reaction N(6)-[(R)-lipoyl]-L-lysyl-[protein] + 3-methyl-2-oxobutanoate + H(+) = N(6)-[(R)-S(8)-2-methylpropanoyldihydrolipoyl]-L-lysyl-[protein] + CO2. In terms of biological role, the branched-chain alpha-keto dehydrogenase complex catalyzes the overall conversion of alpha-keto acids to acyl-CoA and CO(2). It contains multiple copies of three enzymatic components: branched-chain alpha-keto acid decarboxylase (E1), lipoamide acyltransferase (E2) and lipoamide dehydrogenase (E3). This is 2-oxoisovalerate dehydrogenase subunit alpha from Thermus thermophilus (strain ATCC BAA-163 / DSM 7039 / HB27).